The primary structure comprises 299 residues: QSGTSGPYTACSELILPVTQCLGQKSAACHVEYNSVINESLPVPFPDCCPANSCCTCPSSSSRNLISGCQPSLSLQRPDLGDLLLGRDASLTCTLSGLKNPEDAVFTWEPTNGNEPVQQRAQRDLSGCYSVSSVLPSSAETWKARTEFTCTVTHPEIDSGSLTATISRGVVTPPQVHLLPPPSEELALNEQVTLTCLVRGFSPKDVLVSWRHQGQEVPEDSFLVWKSMPESSQDKATYAITSLLRVPAEDWNQGDTYSCMVGHEGLAEHFTQKTIDRLAGKPTHVNVSVVVADVEAVCY.

Ig-like domains lie at 71–167 and 174–276; these read PSLS…ATIS and PQVH…KTID.

Its function is as follows. Ig alpha is the major immunoglobulin class in body secretions. It may serve both to defend against local infection and to prevent access of foreign antigens to the general immunologic system. In Oryctolagus cuniculus (Rabbit), this protein is Ig alpha chain C region.